The primary structure comprises 313 residues: D-alanine--D-alanine ligase (313 aa).

Positions 108–308 (KLVWQQTGVP…YSELVVKVLS (201 aa)) constitute an ATP-grasp domain. ATP is bound at residue 138–193 (VAKLGLPLFVKPASEGSSVAVLKVKTADALPAALAEAATHDKIVIVEKSIEGGGEY). Mg(2+) contacts are provided by D262, E275, and N277.

Belongs to the D-alanine--D-alanine ligase family. Mg(2+) serves as cofactor. Mn(2+) is required as a cofactor.

The protein resides in the cytoplasm. It carries out the reaction 2 D-alanine + ATP = D-alanyl-D-alanine + ADP + phosphate + H(+). Its pathway is cell wall biogenesis; peptidoglycan biosynthesis. In terms of biological role, cell wall formation. This Burkholderia multivorans (strain ATCC 17616 / 249) protein is D-alanine--D-alanine ligase.